Reading from the N-terminus, the 157-residue chain is Small ribosomal subunit protein uS7 (157 aa).

It belongs to the universal ribosomal protein uS7 family. As to quaternary structure, part of the 30S ribosomal subunit. Contacts proteins S9 and S11.

In terms of biological role, one of the primary rRNA binding proteins, it binds directly to 16S rRNA where it nucleates assembly of the head domain of the 30S subunit. Is located at the subunit interface close to the decoding center, probably blocks exit of the E-site tRNA. The chain is Small ribosomal subunit protein uS7 from Chloroflexus aggregans (strain MD-66 / DSM 9485).